The primary structure comprises 171 residues: Transcriptional repressor NrdR (171 aa).

The disordered stretch occupies residues Met-1 to Asn-21. The segment at Cys-3–Cys-34 is a zinc-finger region. Residues Gln-7–Ser-18 show a composition bias toward basic and acidic residues. In terms of domain architecture, ATP-cone spans Ile-49 to Asp-139.

The protein belongs to the NrdR family. Zn(2+) serves as cofactor.

In terms of biological role, negatively regulates transcription of bacterial ribonucleotide reductase nrd genes and operons by binding to NrdR-boxes. This chain is Transcriptional repressor NrdR, found in Microcystis aeruginosa (strain NIES-843 / IAM M-2473).